The following is a 245-amino-acid chain: Eukaryotic translation initiation factor 6 (245 aa).

It belongs to the eIF-6 family. Monomer. Associates with the 60S ribosomal subunit.

It localises to the cytoplasm. It is found in the nucleus. The protein localises to the nucleolus. Functionally, binds to the 60S ribosomal subunit and prevents its association with the 40S ribosomal subunit to form the 80S initiation complex in the cytoplasm. May also be involved in ribosome biogenesis. This is Eukaryotic translation initiation factor 6 (eif6) from Danio rerio (Zebrafish).